A 474-amino-acid chain; its full sequence is 3-isopropylmalate dehydratase large subunit (474 aa).

[4Fe-4S] cluster is bound by residues cysteine 352, cysteine 413, and cysteine 416.

The protein belongs to the aconitase/IPM isomerase family. LeuC type 1 subfamily. As to quaternary structure, heterodimer of LeuC and LeuD. It depends on [4Fe-4S] cluster as a cofactor.

It catalyses the reaction (2R,3S)-3-isopropylmalate = (2S)-2-isopropylmalate. It functions in the pathway amino-acid biosynthesis; L-leucine biosynthesis; L-leucine from 3-methyl-2-oxobutanoate: step 2/4. Its function is as follows. Catalyzes the isomerization between 2-isopropylmalate and 3-isopropylmalate, via the formation of 2-isopropylmaleate. In Pseudomonas savastanoi pv. phaseolicola (strain 1448A / Race 6) (Pseudomonas syringae pv. phaseolicola (strain 1448A / Race 6)), this protein is 3-isopropylmalate dehydratase large subunit.